The primary structure comprises 156 residues: Transcriptional repressor NrdR (156 aa).

A zinc finger lies at 3–34 (CPFCGSMDTRVLDSRPTLDGTAIRRRRECSSC). One can recognise an ATP-cone domain in the interval 49-139 (VLVVKKDGRR…VYRDFREVDQ (91 aa)).

The protein belongs to the NrdR family. The cofactor is Zn(2+).

In terms of biological role, negatively regulates transcription of bacterial ribonucleotide reductase nrd genes and operons by binding to NrdR-boxes. This is Transcriptional repressor NrdR from Thermotoga maritima (strain ATCC 43589 / DSM 3109 / JCM 10099 / NBRC 100826 / MSB8).